Here is an 87-residue protein sequence, read N- to C-terminus: Probable Fe(2+)-trafficking protein (87 aa).

This sequence belongs to the Fe(2+)-trafficking protein family.

Functionally, could be a mediator in iron transactions between iron acquisition and iron-requiring processes, such as synthesis and/or repair of Fe-S clusters in biosynthetic enzymes. This Francisella tularensis subsp. mediasiatica (strain FSC147) protein is Probable Fe(2+)-trafficking protein.